We begin with the raw amino-acid sequence, 98 residues long: Cuticle protein 67, isoform A (98 aa).

A run of 6 repeats spans residues 7 to 10 (AAPA), 15 to 18 (AAPA), 22 to 25 (AAPA), 79 to 82 (AAPA), 86 to 89 (AAPA), and 92 to 95 (AAPA).

Its function is as follows. Component of the cuticle of migratory locust which contains more than 100 different structural proteins. In Locusta migratoria (Migratory locust), this protein is Cuticle protein 67, isoform A.